Consider the following 241-residue polypeptide: tRNA pseudouridine synthase A (241 aa).

Asp52 functions as the Nucleophile in the catalytic mechanism. Tyr111 contributes to the substrate binding site.

Belongs to the tRNA pseudouridine synthase TruA family. In terms of assembly, homodimer.

It catalyses the reaction uridine(38/39/40) in tRNA = pseudouridine(38/39/40) in tRNA. Functionally, formation of pseudouridine at positions 38, 39 and 40 in the anticodon stem and loop of transfer RNAs. The sequence is that of tRNA pseudouridine synthase A from Ureaplasma urealyticum serovar 10 (strain ATCC 33699 / Western).